The following is a 219-amino-acid chain: Isovaleryl-homoserine lactone synthase (219 aa).

The protein belongs to the autoinducer synthase family.

It catalyses the reaction 3-methylbutanoyl-CoA + S-adenosyl-L-methionine = N-isovaleryl-L-homoserine lactone + S-methyl-5'-thioadenosine + CoA + H(+). Catalyzes the synthesis of IV-HSL (isovaleryl-homoserine lactone), a quorum-sensing (QS) autoinducer molecule which binds to BjaR1 transcriptional regulator to activate expression of QS-dependent genes. Is active with isovaleryl-CoA but cannot use isovaleryl-ACP as acyl donor. The polypeptide is Isovaleryl-homoserine lactone synthase (bjaI) (Bradyrhizobium diazoefficiens (strain JCM 10833 / BCRC 13528 / IAM 13628 / NBRC 14792 / USDA 110)).